The chain runs to 79 residues: Acyl carrier protein (79 aa).

A Carrier domain is found at 2 to 77 (STIEERVKKI…QAIDYVKVHV (76 aa)). The residue at position 37 (Ser-37) is an O-(pantetheine 4'-phosphoryl)serine.

It belongs to the acyl carrier protein (ACP) family. In terms of processing, 4'-phosphopantetheine is transferred from CoA to a specific serine of apo-ACP by AcpS. This modification is essential for activity because fatty acids are bound in thioester linkage to the sulfhydryl of the prosthetic group.

It is found in the cytoplasm. It participates in lipid metabolism; fatty acid biosynthesis. Carrier of the growing fatty acid chain in fatty acid biosynthesis. This Xanthomonas albilineans protein is Acyl carrier protein.